The chain runs to 578 residues: Lysine--tRNA ligase (578 aa).

Positions 414 and 421 each coordinate Mg(2+).

Belongs to the class-II aminoacyl-tRNA synthetase family. As to quaternary structure, homodimer. The cofactor is Mg(2+).

It localises to the cytoplasm. It carries out the reaction tRNA(Lys) + L-lysine + ATP = L-lysyl-tRNA(Lys) + AMP + diphosphate. This is Lysine--tRNA ligase from Porphyromonas gingivalis (strain ATCC 33277 / DSM 20709 / CIP 103683 / JCM 12257 / NCTC 11834 / 2561).